Here is a 278-residue protein sequence, read N- to C-terminus: Orotidine 5'-phosphate decarboxylase (278 aa).

Residues Asp40, 62–64 (KTH), 93–102 (DRKFADIGNT), Tyr223, and Arg242 each bind substrate. Lys95 serves as the catalytic Proton donor.

Belongs to the OMP decarboxylase family.

It carries out the reaction orotidine 5'-phosphate + H(+) = UMP + CO2. It functions in the pathway pyrimidine metabolism; UMP biosynthesis via de novo pathway; UMP from orotate: step 2/2. The chain is Orotidine 5'-phosphate decarboxylase (URA1) from Schizophyllum commune (Split gill fungus).